The primary structure comprises 99 residues: Microcin E492 (99 aa).

Positions 1 to 15 (MREISQKDLNLAFGA) are cleaved as a signal peptide. The tract at residues 80–99 (SWNGSGSGYNSATSSSGSGS) is disordered. Low complexity predominate over residues 87–99 (GYNSATSSSGSGS). Ser99 is subject to Serine microcin E492 siderophore ester.

Belongs to the class IIa microcin family. As to quaternary structure, multimer. Possibly forms a homodimer or a homotrimer. In terms of processing, the C-terminal Ser is modified by attachment to a siderophore similar to enterobactin, which can bind one atom of iron. The modification consists of an ester linkage of the serine carboxyl to O6 of a glucose which is linked by a C-glycosidic bond to the 5'-benzoyl of a linear triester of N-(2,3-dihydroxybenzoyl)serine. Presence of the siderophore ester increases the antibacterial activity of the protein.

Functionally, channel-forming bacteriocin. Forms cation-selective channels. Active on enterobacteria, with highest activity against E.coli. Not active on other Gram-negative bacteria, Gram-positive bacteria or fungi. The unmodified protein is active against E.coli and S.enteritidis. When the siderophore ester is present at Ser-99, antibacterial activity against these species is increased and activity is also detected against E.cloacae and K.pneumoniae. Neutralized by its immunity protein MceB. The chain is Microcin E492 from Klebsiella pneumoniae.